The following is an 820-amino-acid chain: Phenylalanine--tRNA ligase beta subunit (820 aa).

The region spanning 42–154 is the tRNA-binding domain; the sequence is KGGLEGLVIG…EDAVPGTLAK (113 aa). The B5 domain occupies 413 to 489; sequence AQDFIVELTY…RIYGYNNVEI (77 aa). 4 residues coordinate Mg(2+): Asp-467, Asp-473, Glu-476, and Asp-477. One can recognise an FDX-ACB domain in the interval 727-820; sequence SKFPAVKRDL…LEDKLGAKLR (94 aa).

This sequence belongs to the phenylalanyl-tRNA synthetase beta subunit family. Type 1 subfamily. As to quaternary structure, tetramer of two alpha and two beta subunits. The cofactor is Mg(2+).

It localises to the cytoplasm. It carries out the reaction tRNA(Phe) + L-phenylalanine + ATP = L-phenylalanyl-tRNA(Phe) + AMP + diphosphate + H(+). The chain is Phenylalanine--tRNA ligase beta subunit from Bacteroides fragilis (strain YCH46).